The chain runs to 219 residues: Probable nicotinate-nucleotide adenylyltransferase (219 aa).

The protein belongs to the NadD family.

It catalyses the reaction nicotinate beta-D-ribonucleotide + ATP + H(+) = deamido-NAD(+) + diphosphate. It functions in the pathway cofactor biosynthesis; NAD(+) biosynthesis; deamido-NAD(+) from nicotinate D-ribonucleotide: step 1/1. Its function is as follows. Catalyzes the reversible adenylation of nicotinate mononucleotide (NaMN) to nicotinic acid adenine dinucleotide (NaAD). The protein is Probable nicotinate-nucleotide adenylyltransferase of Pseudoalteromonas atlantica (strain T6c / ATCC BAA-1087).